Reading from the N-terminus, the 517-residue chain is GMP synthase [glutamine-hydrolyzing] (517 aa).

In terms of domain architecture, Glutamine amidotransferase type-1 spans 9-199 (RILILDFGSQ…VLGVCGCERL (191 aa)). C86 serves as the catalytic Nucleophile. Residues H173 and E175 contribute to the active site. A GMPS ATP-PPase domain is found at 200 to 392 (WTSESIIEDA…LGLPYNMLYR (193 aa)). 227–233 (SGGVDSS) contributes to the ATP binding site.

In terms of assembly, homodimer.

The catalysed reaction is XMP + L-glutamine + ATP + H2O = GMP + L-glutamate + AMP + diphosphate + 2 H(+). It functions in the pathway purine metabolism; GMP biosynthesis; GMP from XMP (L-Gln route): step 1/1. In terms of biological role, catalyzes the synthesis of GMP from XMP. The polypeptide is GMP synthase [glutamine-hydrolyzing] (Vibrio campbellii (strain ATCC BAA-1116)).